The following is a 392-amino-acid chain: tRNA (guanine(26)-N(2)/guanine(27)-N(2))-dimethyltransferase (392 aa).

Residues 2-375 (EIVQEGIAKI…LSFEEVMKKM (374 aa)) form the Trm1 methyltransferase domain. Residues arginine 36, arginine 66, aspartate 84, glutamate 113, and alanine 114 each contribute to the S-adenosyl-L-methionine site. Zn(2+) contacts are provided by cysteine 247, cysteine 250, cysteine 266, and cysteine 269.

This sequence belongs to the class I-like SAM-binding methyltransferase superfamily. Trm1 family.

The enzyme catalyses guanosine(26)/guanosine(27) in tRNA + 4 S-adenosyl-L-methionine = N(2)-dimethylguanosine(26)/N(2)-dimethylguanosine(27) in tRNA + 4 S-adenosyl-L-homocysteine + 4 H(+). In terms of biological role, dimethylates the guanine residues at position 26 and 27 of one or more tRNAs using S-adenosyl-L-methionine as donor of the methyl groups. This is tRNA (guanine(26)-N(2)/guanine(27)-N(2))-dimethyltransferase from Aquifex aeolicus (strain VF5).